The chain runs to 74 residues: Bacteriocin hiracin-JM79 (74 aa).

The signal sequence occupies residues 1–30 (MKKKVLKHCVILGILGTCLAGIGTGIKVDA).

It is found in the secreted. Functionally, bacteriocin with antibacterial activity against the Gram-positive Listeria, Enterococcus, Propionibacterium, Staphylococcus and some strains of Clostridium, Lactobacillus and Pediococcus. Lacks antibacterial activity against Gram-negative bacteria. The polypeptide is Bacteriocin hiracin-JM79 (Enterococcus hirae).